The chain runs to 498 residues: Probable global transactivator (498 aa).

In terms of domain architecture, Helicase ATP-binding spans 43–206 (RERRGRPHGG…YAIIHFLRCR (164 aa)). 55–63 (ADDMGLGKT) contributes to the ATP binding site. Positions 157–160 (DEAH) match the DEAH box motif. A Helicase C-terminal domain is found at 337–493 (ELVQRVLDTP…RTALNYEDIK (157 aa)).

Belongs to the SNF2/RAD54 helicase family.

The chain is Probable global transactivator (GTA) from Orgyia pseudotsugata (Douglas-fir tussock moth).